A 144-amino-acid polypeptide reads, in one-letter code: Maximins 3/H2 (144 aa).

The signal sequence occupies residues 1–18 (MNFKYIVAVSFLIASAYA). 2 consecutive propeptides follow at residues 19 to 43 (RSVQ…REIR) and 74 to 123 (TAEE…KEKR). I143 carries the isoleucine amide modification.

The protein belongs to the bombinin family. As to expression, expressed by the skin glands.

Its subcellular location is the secreted. In terms of biological role, maximin-3 shows antibacterial activity against both Gram-positive and Gram-negative bacteria. It also shows antimicrobial activity against the fungus C.albicans, but not against A.flavus nor P.uticale. It has little hemolytic activity. It possess a significant cytotoxicity against tumor cell lines. It possess a significant anti-HIV activity. It shows high spermicidal activity. Maximin-H2 shows antibacterial activity against both Gram-positive and Gram-negative bacteria. It also shows antimicrobial activity against the fungus C.albicans. Shows strong hemolytic activity. The sequence is that of Maximins 3/H2 from Bombina maxima (Giant fire-bellied toad).